Reading from the N-terminus, the 547-residue chain is ATP synthase subunit alpha (547 aa).

172–179 (GDRKTGKT) provides a ligand contact to ATP.

This sequence belongs to the ATPase alpha/beta chains family. As to quaternary structure, F-type ATPases have 2 components, CF(1) - the catalytic core - and CF(0) - the membrane proton channel. CF(1) has five subunits: alpha(3), beta(3), gamma(1), delta(1), epsilon(1). CF(0) has three main subunits: a(1), b(2) and c(9-12). The alpha and beta chains form an alternating ring which encloses part of the gamma chain. CF(1) is attached to CF(0) by a central stalk formed by the gamma and epsilon chains, while a peripheral stalk is formed by the delta and b chains.

The protein localises to the cell membrane. The catalysed reaction is ATP + H2O + 4 H(+)(in) = ADP + phosphate + 5 H(+)(out). Functionally, produces ATP from ADP in the presence of a proton gradient across the membrane. The alpha chain is a regulatory subunit. The chain is ATP synthase subunit alpha from Rhodococcus erythropolis (strain PR4 / NBRC 100887).